The following is a 289-amino-acid chain: Shikimate dehydrogenase (NADP(+)) (289 aa).

Residues S19–S21 and T66 contribute to the shikimate site. The Proton acceptor role is filled by K70. Positions 91 and 106 each coordinate shikimate. NADP(+) is bound by residues G131–A135 and L229. A shikimate-binding site is contributed by Y231. G252 contributes to the NADP(+) binding site.

The protein belongs to the shikimate dehydrogenase family. Homodimer.

It carries out the reaction shikimate + NADP(+) = 3-dehydroshikimate + NADPH + H(+). The protein operates within metabolic intermediate biosynthesis; chorismate biosynthesis; chorismate from D-erythrose 4-phosphate and phosphoenolpyruvate: step 4/7. Functionally, involved in the biosynthesis of the chorismate, which leads to the biosynthesis of aromatic amino acids. Catalyzes the reversible NADPH linked reduction of 3-dehydroshikimate (DHSA) to yield shikimate (SA). The chain is Shikimate dehydrogenase (NADP(+)) from Nostoc sp. (strain PCC 7120 / SAG 25.82 / UTEX 2576).